We begin with the raw amino-acid sequence, 335 residues long: MLALGKLLELTLTDHEPAEKTQVTPKGARLRWLGEGALEVRPAESEDCGLDLLLSAGIHGNETAPIELLERLLHGVANGKIKPRARLLFLFGNPVAIRKGERFIEQDINRLFNGRHELSSGFEALRAAELEQFARVFFSKPGRSRLHYDLHTAIRGSKIEQFALYPYKEGRKHSRRELARLAAAGMEAVLLQSKSSITFSAFTYEQLDAEAFTLELGKARPFGQNEQVNLDKLEERLIRIIEATEPEGESSLDGLQLFSVSREIIKHSDSFHLHLPADIENFSELSKGYLLAEDLAEMRWVVEEEGARIIFPNPKVRNGLRAGILIVPDSGQRLG.

Zn(2+) is bound by residues His-59, Glu-62, and His-151. The active site involves Glu-215.

It belongs to the AspA/AstE family. Succinylglutamate desuccinylase subfamily. Requires Zn(2+) as cofactor.

It carries out the reaction N-succinyl-L-glutamate + H2O = L-glutamate + succinate. Its pathway is amino-acid degradation; L-arginine degradation via AST pathway; L-glutamate and succinate from L-arginine: step 5/5. Functionally, transforms N(2)-succinylglutamate into succinate and glutamate. This is Succinylglutamate desuccinylase from Pseudomonas putida (strain GB-1).